Here is a 4555-residue protein sequence, read N- to C-terminus: Protocadherin Fat 3 (4555 aa).

The first 31 residues, 1-31, serve as a signal peptide directing secretion; it reads MSVTMGHCMGTKPPSCIILLLLKLFATVSQG. Topologically, residues 32-4153 are extracellular; the sequence is LPGTGPLGFH…AGHSYVGKEE (4122 aa). Cadherin domains follow at residues 43–157, 158–262, 263–374, 376–471, 472–577, 578–680, 726–830, 831–935, 936–1042, 1043–1147, 1148–1253, 1254–1358, 1362–1459, 1460–1565, 1566–1768, 1769–1882, 1883–1985, 1982–2083, 2084–2185, 2186–2286, 2287–2393, 2394–2495, 2496–2599, 2600–2707, 2708–2813, 2814–2923, 2924–3028, 3029–3130, 3131–3235, 3236–3340, 3341–3445, 3446–3550, and 3551–3660; these read THST…RPLF, SPTT…NEHA, PIIH…TPVR, EKDV…TPEF, QEAL…SPLF, EKVA…SKSF, KSFP…NPVF, LQDS…SPAF, IPSS…TPYF, PDFA…APLT, SEPI…RPQF, PEKV…SPIP, DEPF…GPEF, SQPH…SPYF, TNPL…PPVF, LFSQ…PPVF, TQAV…TQSF, TQSF…SPVF, VGLP…MPVF, DKPF…PPVF, DQPT…PPVF, NQLI…SPAF, SQST…APQF, MTVE…LPSF, TQSQ…KPVF, ETST…APVF, AHEV…SPVC, DQVA…PPVF, SSNH…PPVF, ERRD…PPRF, SQDV…SPVF, TPAN…KPTA, and IPLE…PEDF. A glycan (N-linked (GlcNAc...) asparagine) is linked at Asn-48. Asn-341 is a glycosylation site (N-linked (GlcNAc...) asparagine). N-linked (GlcNAc...) asparagine glycosylation is found at Asn-481, Asn-562, Asn-667, Asn-799, Asn-879, Asn-898, and Asn-1006. 2 N-linked (GlcNAc...) asparagine glycosylation sites follow: Asn-1367 and Asn-1429. N-linked (GlcNAc...) asparagine glycosylation occurs at Asn-1751. 3 N-linked (GlcNAc...) asparagine glycosylation sites follow: Asn-1944, Asn-1993, and Asn-1996. N-linked (GlcNAc...) asparagine glycans are attached at residues Asn-2208, Asn-2292, Asn-2331, and Asn-2467. A glycan (N-linked (GlcNAc...) asparagine) is linked at Asn-2734. Asn-3000 is a glycosylation site (N-linked (GlcNAc...) asparagine). Asn-3201 carries N-linked (GlcNAc...) asparagine glycosylation. N-linked (GlcNAc...) asparagine glycans are attached at residues Asn-3449, Asn-3618, and Asn-3741. In terms of domain architecture, EGF-like 1 spans 3794-3832; sequence SNDPCVEKPCPEDMQCVGYEASRRPFLCQCPPGKLGECS. 3 cysteine pairs are disulfide-bonded: Cys-3798-Cys-3809, Cys-3803-Cys-3821, and Cys-3823-Cys-3831. Positions 3834-4017 constitute a Laminin G-like domain; sequence HTSLSFAGNS…VGLTELKLGC (184 aa). Asn-3926 is a glycosylation site (N-linked (GlcNAc...) asparagine). Disulfide bonds link Cys-3984–Cys-4017, Cys-4024–Cys-4035, Cys-4029–Cys-4045, Cys-4047–Cys-4056, Cys-4063–Cys-4074, Cys-4068–Cys-4083, Cys-4085–Cys-4094, Cys-4101–Cys-4112, Cys-4106–Cys-4121, and Cys-4123–Cys-4132. EGF-like domains are found at residues 4020–4057 and 4059–4095; these read YPDA…TNCE and EITA…VTCE. Residues 4097-4133 form the EGF-like 4; calcium-binding domain; the sequence is DVDECEREECENGGSCVNLFGSFFCNCTPGYVGQYCG. A helical membrane pass occupies residues 4154-4174; it reads LIGIAVVLFVIFTLIVLFIVF. At 4175 to 4555 the chain is on the cytoplasmic side; it reads RKKVFRKNYS…FVETQQQTQV (381 aa). 2 disordered regions span residues 4300-4353 and 4395-4474; these read IRKN…YHWD and GGYD…LGGP. Over residues 4322-4343 the composition is skewed to polar residues; sequence CFTNSNKGSNSEVQSLSSFQSD. Arg-4508 and Arg-4518 each carry omega-N-methylarginine.

As to expression, restricted to the nervous system, mainly in brain. In brain, it is highly expressed in the olfactory bulb and retina. In the developing olfactory bulb, it localizes along the dendrites of these cells as well as in their axons to some extent. In retina, it cocentrates in the inner plexiform layer throughout development (at protein level).

Its subcellular location is the membrane. Its function is as follows. May play a role in the interactions between neurites derived from specific subsets of neurons during development. The protein is Protocadherin Fat 3 (Fat3) of Mus musculus (Mouse).